Reading from the N-terminus, the 281-residue chain is MKLTGEVALITGGASGLGRALVDRFVAEGARVAVLDKSAERLRELEVAHGGNAVGVVGDVRSLQDQKRAAERCLAAFGKIDTLIPNAGIWDYSTALADLPEDKIDAAFDDIFHVNVKGYIHAVKACLPALVSSRGSVVFTISNAGFYPNGGGPLYTATKHAVVGLVRQMAFELAPHVRVNGVAPGGMNTDLRGPSSLGLSEQSISSVPLADMLKSVLPIGRMPALEEYTGAYVFFATRGDSLPATGALLNYDGGMGVRGFLTAAGGADLPEKLNINREGQE.

Position 10 to 34 (Ile-10 to Val-34) interacts with NAD(+). Ser-142 lines the substrate pocket. Tyr-155 functions as the Proton acceptor in the catalytic mechanism.

The protein belongs to the short-chain dehydrogenases/reductases (SDR) family. In terms of assembly, homotetramer.

The catalysed reaction is (2R,3S)-3-phenylcyclohexa-3,5-diene-1,2-diol + NAD(+) = biphenyl-2,3-diol + NADH + H(+). Its pathway is xenobiotic degradation; biphenyl degradation; 2-hydroxy-2,4-pentadienoate and benzoate from biphenyl: step 2/4. The protein is Cis-2,3-dihydrobiphenyl-2,3-diol dehydrogenase (bphB) of Comamonas testosteroni (Pseudomonas testosteroni).